We begin with the raw amino-acid sequence, 139 residues long: Putative pre-16S rRNA nuclease (139 aa).

Belongs to the YqgF nuclease family.

Its subcellular location is the cytoplasm. Functionally, could be a nuclease involved in processing of the 5'-end of pre-16S rRNA. In Pectobacterium atrosepticum (strain SCRI 1043 / ATCC BAA-672) (Erwinia carotovora subsp. atroseptica), this protein is Putative pre-16S rRNA nuclease.